The sequence spans 352 residues: Phosphate acyltransferase (352 aa).

The segment covering 328–339 (ESFPGDAREREG) has biased composition (basic and acidic residues). A disordered region spans residues 328–352 (ESFPGDAREREGAPAPDAGTERVAS).

The protein belongs to the PlsX family. As to quaternary structure, homodimer. Probably interacts with PlsY.

It localises to the cytoplasm. It carries out the reaction a fatty acyl-[ACP] + phosphate = an acyl phosphate + holo-[ACP]. It functions in the pathway lipid metabolism; phospholipid metabolism. In terms of biological role, catalyzes the reversible formation of acyl-phosphate (acyl-PO(4)) from acyl-[acyl-carrier-protein] (acyl-ACP). This enzyme utilizes acyl-ACP as fatty acyl donor, but not acyl-CoA. The protein is Phosphate acyltransferase of Citrifermentans bemidjiense (strain ATCC BAA-1014 / DSM 16622 / JCM 12645 / Bem) (Geobacter bemidjiensis).